Consider the following 370-residue polypeptide: tRNA 2-selenouridine synthase (370 aa).

One can recognise a Rhodanese domain in the interval 12-136; the sequence is FLDDVPMMDM…MRTFLLETTQ (125 aa). Cysteine 95 (S-selanylcysteine intermediate) is an active-site residue.

It belongs to the SelU family. As to quaternary structure, monomer.

The enzyme catalyses 5-methylaminomethyl-2-thiouridine(34) in tRNA + selenophosphate + (2E)-geranyl diphosphate + H2O + H(+) = 5-methylaminomethyl-2-selenouridine(34) in tRNA + (2E)-thiogeraniol + phosphate + diphosphate. It catalyses the reaction 5-methylaminomethyl-2-thiouridine(34) in tRNA + (2E)-geranyl diphosphate = 5-methylaminomethyl-S-(2E)-geranyl-thiouridine(34) in tRNA + diphosphate. The catalysed reaction is 5-methylaminomethyl-S-(2E)-geranyl-thiouridine(34) in tRNA + selenophosphate + H(+) = 5-methylaminomethyl-2-(Se-phospho)selenouridine(34) in tRNA + (2E)-thiogeraniol. It carries out the reaction 5-methylaminomethyl-2-(Se-phospho)selenouridine(34) in tRNA + H2O = 5-methylaminomethyl-2-selenouridine(34) in tRNA + phosphate. In terms of biological role, involved in the post-transcriptional modification of the uridine at the wobble position (U34) of tRNA(Lys), tRNA(Glu) and tRNA(Gln). Catalyzes the conversion of 2-thiouridine (S2U-RNA) to 2-selenouridine (Se2U-RNA). Acts in a two-step process involving geranylation of 2-thiouridine (S2U) to S-geranyl-2-thiouridine (geS2U) and subsequent selenation of the latter derivative to 2-selenouridine (Se2U) in the tRNA chain. The chain is tRNA 2-selenouridine synthase from Pseudomonas putida (strain ATCC 700007 / DSM 6899 / JCM 31910 / BCRC 17059 / LMG 24140 / F1).